A 204-amino-acid chain; its full sequence is Urease accessory protein UreG (204 aa).

12-19 contacts GTP; sequence GPVGSGKT.

This sequence belongs to the SIMIBI class G3E GTPase family. UreG subfamily. Homodimer. UreD, UreF and UreG form a complex that acts as a GTP-hydrolysis-dependent molecular chaperone, activating the urease apoprotein by helping to assemble the nickel containing metallocenter of UreC. The UreE protein probably delivers the nickel.

The protein localises to the cytoplasm. Its function is as follows. Facilitates the functional incorporation of the urease nickel metallocenter. This process requires GTP hydrolysis, probably effectuated by UreG. The protein is Urease accessory protein UreG of Hahella chejuensis (strain KCTC 2396).